The primary structure comprises 692 residues: DNA ligase (692 aa).

Over residues 1-14 the composition is skewed to polar residues; it reads MQPDLFSTASQADA. The interval 1–27 is disordered; the sequence is MQPDLFSTASQADANATPEEPDASNPA. NAD(+)-binding positions include 54–58, 103–104, and E134; these read DAEYD and SL. The active-site N6-AMP-lysine intermediate is the K136. 4 residues coordinate NAD(+): R157, E194, K311, and K335. Zn(2+) is bound by residues C429, C432, C447, and C454. In terms of domain architecture, BRCT spans 612–692; that stretch reads NKPKPFAGKT…ALLQLLDTHE (81 aa).

This sequence belongs to the NAD-dependent DNA ligase family. LigA subfamily. Mg(2+) is required as a cofactor. Requires Mn(2+) as cofactor.

The enzyme catalyses NAD(+) + (deoxyribonucleotide)n-3'-hydroxyl + 5'-phospho-(deoxyribonucleotide)m = (deoxyribonucleotide)n+m + AMP + beta-nicotinamide D-nucleotide.. DNA ligase that catalyzes the formation of phosphodiester linkages between 5'-phosphoryl and 3'-hydroxyl groups in double-stranded DNA using NAD as a coenzyme and as the energy source for the reaction. It is essential for DNA replication and repair of damaged DNA. In Janthinobacterium sp. (strain Marseille) (Minibacterium massiliensis), this protein is DNA ligase.